The primary structure comprises 131 residues: Probable calcium-binding protein CML34 (131 aa).

EF-hand domains lie at 1–33 (MSAK…FSPY), 34–69 (FTQE…MLKE), 70–97 (VFVF…LGKK), and 98–131 (FTEE…IGDI). 10 residues coordinate Ca(2+): Asp11, Asn13, Asp15, Lys17, Glu22, Asp47, Asp49, Asn51, Glu53, and Glu58. Ca(2+)-binding residues include Asp111, Asp113, Asp115, Tyr117, and Glu122.

In terms of biological role, potential calcium sensor. The polypeptide is Probable calcium-binding protein CML34 (CML34) (Arabidopsis thaliana (Mouse-ear cress)).